We begin with the raw amino-acid sequence, 277 residues long: Large ribosomal subunit protein uL2 (277 aa).

Residues 226–277 are disordered; the sequence is MNPVDHPHGGGEGRSPIGMPSPVTPWGKPTLGYKTRKPNKKSDRLIVSRRKK.

This sequence belongs to the universal ribosomal protein uL2 family. In terms of assembly, part of the 50S ribosomal subunit. Forms a bridge to the 30S subunit in the 70S ribosome.

Its function is as follows. One of the primary rRNA binding proteins. Required for association of the 30S and 50S subunits to form the 70S ribosome, for tRNA binding and peptide bond formation. It has been suggested to have peptidyltransferase activity; this is somewhat controversial. Makes several contacts with the 16S rRNA in the 70S ribosome. The chain is Large ribosomal subunit protein uL2 from Symbiobacterium thermophilum (strain DSM 24528 / JCM 14929 / IAM 14863 / T).